Here is a 286-residue protein sequence, read N- to C-terminus: MAGAKEIKTKIASVKNTQKITSAMEMVAASKMRRAQERMAASRPYAESMRKVIGHVAQGSLEYKHPYLEVREAKRVGYIVVATDRGLCGGLNVNLFKKVLLDLKNWKEQGAEVEFCPIGARSVQFFKSFGGTMPAHASGLGDAPSIADLIGTVRVMLKAYNEGKLDRLFIVFNKFVNTMTQAPVIEQLLPLPKSEEVANKHPWDYIYEPDPKVLLDTLLVRYIESQVYQGVVENIASEQAARMVAMKAATDNAGELINDLQLVYNKARQAAITQELSEIVSGASAV.

It belongs to the ATPase gamma chain family. F-type ATPases have 2 components, CF(1) - the catalytic core - and CF(0) - the membrane proton channel. CF(1) has five subunits: alpha(3), beta(3), gamma(1), delta(1), epsilon(1). CF(0) has three main subunits: a, b and c.

It localises to the cell inner membrane. Produces ATP from ADP in the presence of a proton gradient across the membrane. The gamma chain is believed to be important in regulating ATPase activity and the flow of protons through the CF(0) complex. The protein is ATP synthase gamma chain of Shewanella putrefaciens (strain CN-32 / ATCC BAA-453).